Reading from the N-terminus, the 2451-residue chain is Reducing polyketide synthase 8 (2451 aa).

Residues 12–434 (NEPIAIVGSS…GTNAHAILEA (423 aa)) enclose the Ketosynthase family 3 (KS3) domain. Catalysis depends on for beta-ketoacyl synthase activity residues C174, H313, and H354. Residues 538-846 (VFTGQGAQWA…GPATETINNM (309 aa)) enclose the Malonyl-CoA:ACP transacylase (MAT) domain. The interval 940-1085 (HQLLGSASTF…GFLRIELGAP (146 aa)) is N-terminal hotdog fold. Residues 940–1254 (HQLLGSASTF…LLNLPGSLRS (315 aa)) form the PKS/mFAS DH domain. Residue H974 is the Proton acceptor; for dehydratase activity of the active site. The interval 1100-1254 (LIPLDVEELY…LLNLPGSLRS (155 aa)) is C-terminal hotdog fold. Catalysis depends on D1160, which acts as the Proton donor; for dehydratase activity. The tract at residues 1294–1590 (LVLFYCQKVL…QHFCSVMLSQ (297 aa)) is methyltransfrase (MT) domain. A Ketoreductase (KR) domain is found at 2088–2266 (TYLLLGLAGD…PGCVVHIGGV (179 aa)). Residues 2366-2451 (DACLDLLLGG…LAIWRKQVKA (86 aa)) form the Carrier domain. The residue at position 2404 (S2404) is an O-(pantetheine 4'-phosphoryl)serine.

Pantetheine 4'-phosphate serves as cofactor.

Its pathway is secondary metabolite biosynthesis. Functionally, reducing polyketide synthase; part of the gene cluster that mediates the biosynthesis of fusamarins, isocoumarin derivatives that show moderate cytotoxicity with IC(50) values between 1 and 50 uM. The polyketide synthase FMN1 probably synthesizes two different polyketides, a tetra- and a pentaketide, containinga varying number of double bonds depending on the selective actions of the trans-enoyl reductase FMN2. Chain fusion will presumably be mediated by the KS domain before finally offloading is catalyzed by the alpha/beta hydrolase fold enzyme FMN3. The polypeptide is Reducing polyketide synthase 8 (Fusarium mangiferae (Mango malformation disease fungus)).